The primary structure comprises 202 residues: uncharacterized protein (202 aa).

Residues 179–202 (FDEQDSTPELPPNYLLDSQKKSQG) are disordered.

This is an uncharacterized protein from Haemophilus influenzae (strain ATCC 51907 / DSM 11121 / KW20 / Rd).